The chain runs to 181 residues: Cyclic AMP-dependent transcription factor ATF-3 (181 aa).

A Glycyl lysine isopeptide (Lys-Gly) (interchain with G-Cter in SUMO2) cross-link involves residue lysine 78. Residues 86–149 (DERKKRRRER…QHLIYMLNLH (64 aa)) form the bZIP domain. Residues 88-110 (RKKRRRERNKIAAAKCRNKKKEK) are basic motif. Residues 114-142 (LQKESEKLESVNAELKAQIEELKNEKQHL) are leucine-zipper. Threonine 162 bears the Phosphothreonine mark. Residue lysine 175 forms a Glycyl lysine isopeptide (Lys-Gly) (interchain with G-Cter in SUMO2) linkage.

Belongs to the bZIP family. ATF subfamily. In terms of assembly, binds DNA as a homodimer or a heterodimer. Interacts with KAT5; promoting KAT5 autoacetylation and KAT5 deubiquitination by USP7.

The protein resides in the nucleus. In terms of biological role, this protein binds the cAMP response element (CRE) (consensus: 5'-GTGACGT[AC][AG]-3'), a sequence present in many viral and cellular promoters. Represses transcription from promoters with ATF sites. It may repress transcription by stabilizing the binding of inhibitory cofactors at the promoter. Its function is as follows. Activates transcription presumably by sequestering inhibitory cofactors away from the promoters. Stress-induced isoform, counteracts the transcriptional repression of isoform 1. The protein is Cyclic AMP-dependent transcription factor ATF-3 of Homo sapiens (Human).